The chain runs to 160 residues: uncharacterized protein (160 aa).

The N-terminal stretch at Met1–Ala29 is a signal peptide.

This is an uncharacterized protein from Sinorhizobium fredii (strain NBRC 101917 / NGR234).